We begin with the raw amino-acid sequence, 140 residues long: Putative pre-16S rRNA nuclease (140 aa).

This sequence belongs to the YqgF nuclease family.

The protein resides in the cytoplasm. Its function is as follows. Could be a nuclease involved in processing of the 5'-end of pre-16S rRNA. The chain is Putative pre-16S rRNA nuclease from Aeromonas hydrophila.